We begin with the raw amino-acid sequence, 463 residues long: uncharacterized protein (463 aa).

Residues 1 to 23 (MKFSSIPIASTLLSLLVASSVTA) form the signal peptide. Disordered stretches follow at residues 174–200 (STYN…TKAS) and 239–258 (GAST…QRKN).

The protein belongs to the but2 family.

It is found in the cytoplasm. This is an uncharacterized protein from Schizosaccharomyces pombe (strain 972 / ATCC 24843) (Fission yeast).